A 300-amino-acid chain; its full sequence is 4-hydroxy-tetrahydrodipicolinate synthase (300 aa).

Residue threonine 55 coordinates pyruvate. Tyrosine 143 acts as the Proton donor/acceptor in catalysis. Catalysis depends on lysine 171, which acts as the Schiff-base intermediate with substrate. Position 211 (isoleucine 211) interacts with pyruvate.

This sequence belongs to the DapA family. Homotetramer; dimer of dimers.

It localises to the cytoplasm. The catalysed reaction is L-aspartate 4-semialdehyde + pyruvate = (2S,4S)-4-hydroxy-2,3,4,5-tetrahydrodipicolinate + H2O + H(+). The protein operates within amino-acid biosynthesis; L-lysine biosynthesis via DAP pathway; (S)-tetrahydrodipicolinate from L-aspartate: step 3/4. Functionally, catalyzes the condensation of (S)-aspartate-beta-semialdehyde [(S)-ASA] and pyruvate to 4-hydroxy-tetrahydrodipicolinate (HTPA). This is 4-hydroxy-tetrahydrodipicolinate synthase from Mycobacterium leprae (strain Br4923).